A 278-amino-acid chain; its full sequence is MKVDDDLVRQVIRPRLRGSHKGSYGRVLLVGGLYPYGGAIIMAAIACVNSGAGLVTVATDRENIIALHAHLPEAMAFDLRETERFLDKLRAADVILIGSGLGEEETADWALELVLANIRSNQNLVVDGSALNLLAKKNQSSLPKCHLILTPHQKEWERLSGLAISEQSVSNTQRALEEFQSGTILVAKSHKTAVYQGAEVTHLEVGGPYQATGGMGDTLAGMVAGFLAQFASTDSYKAVIVATWLHSAIADNIAENAYVVLPTRISKAIPSWMKKLSL.

A YjeF C-terminal domain is found at 4–276 (DDDLVRQVIR…KAIPSWMKKL (273 aa)). The (6S)-NADPHX site is built by A39, G102, and H152. Position 216 (G216) interacts with AMP. Residue D217 participates in (6S)-NADPHX binding.

Belongs to the NnrD/CARKD family. As to quaternary structure, homotetramer. The cofactor is Mg(2+).

It carries out the reaction (6S)-NADHX + ADP = AMP + phosphate + NADH + H(+). The enzyme catalyses (6S)-NADPHX + ADP = AMP + phosphate + NADPH + H(+). In terms of biological role, catalyzes the dehydration of the S-form of NAD(P)HX at the expense of ADP, which is converted to AMP. Together with NAD(P)HX epimerase, which catalyzes the epimerization of the S- and R-forms, the enzyme allows the repair of both epimers of NAD(P)HX, a damaged form of NAD(P)H that is a result of enzymatic or heat-dependent hydration. In Streptococcus thermophilus, this protein is ADP-dependent (S)-NAD(P)H-hydrate dehydratase.